Reading from the N-terminus, the 557-residue chain is Aerobic glycerol-3-phosphate dehydrogenase (557 aa).

21–49 (DLVIIGGGITGAGIALDASERGMKVALVE) contributes to the FAD binding site.

This sequence belongs to the FAD-dependent glycerol-3-phosphate dehydrogenase family. FAD is required as a cofactor.

It is found in the cytoplasm. The catalysed reaction is a quinone + sn-glycerol 3-phosphate = dihydroxyacetone phosphate + a quinol. It functions in the pathway polyol metabolism; glycerol degradation via glycerol kinase pathway; glycerone phosphate from sn-glycerol 3-phosphate (aerobic route): step 1/1. This Staphylococcus aureus (strain bovine RF122 / ET3-1) protein is Aerobic glycerol-3-phosphate dehydrogenase (glpD).